A 753-amino-acid chain; its full sequence is Catalase-peroxidase (753 aa).

Residues 91-243 (WHSAGTYRIG…LGAVQMGLIY (153 aa)) constitute a cross-link (tryptophyl-tyrosyl-methioninium (Trp-Tyr) (with M-269)). The active-site Proton acceptor is the His-92. Positions 243-269 (YVNPEGPDGNPDPLAAAHDIRETFARM) form a cross-link, tryptophyl-tyrosyl-methioninium (Tyr-Met) (with W-91). His-284 lines the heme b pocket.

Belongs to the peroxidase family. Peroxidase/catalase subfamily. As to quaternary structure, homodimer or homotetramer. The cofactor is heme b. Formation of the three residue Trp-Tyr-Met cross-link is important for the catalase, but not the peroxidase activity of the enzyme.

It catalyses the reaction H2O2 + AH2 = A + 2 H2O. The catalysed reaction is 2 H2O2 = O2 + 2 H2O. Its function is as follows. Bifunctional enzyme with both catalase and broad-spectrum peroxidase activity. In Paraburkholderia xenovorans (strain LB400), this protein is Catalase-peroxidase.